The primary structure comprises 434 residues: 3-phosphoshikimate 1-carboxyvinyltransferase (434 aa).

K22, S23, and R27 together coordinate 3-phosphoshikimate. K22 provides a ligand contact to phosphoenolpyruvate. Phosphoenolpyruvate-binding residues include G93 and R121. 3-phosphoshikimate contacts are provided by S168, S169, Q170, S199, D320, and K347. Q170 is a phosphoenolpyruvate binding site. Residue D320 is the Proton acceptor of the active site. Residues R351, R394, and K419 each coordinate phosphoenolpyruvate.

It belongs to the EPSP synthase family. In terms of assembly, monomer.

It is found in the cytoplasm. The enzyme catalyses 3-phosphoshikimate + phosphoenolpyruvate = 5-O-(1-carboxyvinyl)-3-phosphoshikimate + phosphate. It functions in the pathway metabolic intermediate biosynthesis; chorismate biosynthesis; chorismate from D-erythrose 4-phosphate and phosphoenolpyruvate: step 6/7. Catalyzes the transfer of the enolpyruvyl moiety of phosphoenolpyruvate (PEP) to the 5-hydroxyl of shikimate-3-phosphate (S3P) to produce enolpyruvyl shikimate-3-phosphate and inorganic phosphate. The sequence is that of 3-phosphoshikimate 1-carboxyvinyltransferase from Burkholderia ambifaria (strain ATCC BAA-244 / DSM 16087 / CCUG 44356 / LMG 19182 / AMMD) (Burkholderia cepacia (strain AMMD)).